The sequence spans 103 residues: Co-chaperonin GroES (103 aa).

Belongs to the GroES chaperonin family. Heptamer of 7 subunits arranged in a ring. Interacts with the chaperonin GroEL.

The protein localises to the cytoplasm. Its function is as follows. Together with the chaperonin GroEL, plays an essential role in assisting protein folding. The GroEL-GroES system forms a nano-cage that allows encapsulation of the non-native substrate proteins and provides a physical environment optimized to promote and accelerate protein folding. GroES binds to the apical surface of the GroEL ring, thereby capping the opening of the GroEL channel. The chain is Co-chaperonin GroES from Trichodesmium erythraeum (strain IMS101).